Consider the following 266-residue polypeptide: UPF0246 protein Pcryo_0542 (266 aa).

The protein belongs to the UPF0246 family.

This Psychrobacter cryohalolentis (strain ATCC BAA-1226 / DSM 17306 / VKM B-2378 / K5) protein is UPF0246 protein Pcryo_0542.